The sequence spans 95 residues: Stationary phase-expressed protein 1 (95 aa).

Residues 20–38 (FRYIMLGLVGAAVVPTAYM) traverse the membrane as a helical segment.

It is found in the mitochondrion membrane. This is Stationary phase-expressed protein 1 (SPG1) from Saccharomyces cerevisiae (strain RM11-1a) (Baker's yeast).